A 403-amino-acid polypeptide reads, in one-letter code: G2/mitotic-specific cyclin-B1 (403 aa).

This sequence belongs to the cyclin family. Cyclin AB subfamily. As to quaternary structure, interacts with the CDC2 protein kinase to form a serine/threonine kinase holoenzyme complex also known as maturation promoting factor (MPF). The cyclin subunit imparts substrate specificity to the complex.

Essential for the control of the cell cycle at the G2/M (mitosis) transition. In Anguilla japonica (Japanese eel), this protein is G2/mitotic-specific cyclin-B1 (ccnb1).